The chain runs to 371 residues: Caytaxin (371 aa).

The interval 1 to 54 (MGTTEATLRMENVDVKEEWQDEDLPRPLPEETGVELLGSPVEDTSSPPNTLNFN) is disordered. Over residues 11-29 (ENVDVKEEWQDEDLPRPLP) the composition is skewed to basic and acidic residues. Over residues 42–53 (EDTSSPPNTLNF) the composition is skewed to polar residues. The interval 115 to 120 (ELEWGD) is required for interaction with KLC1. The CRAL-TRIO domain occupies 171 to 328 (IRPYMKVVTH…CVLQYEEERL (158 aa)). A mediates interaction with GLS region spans residues 190 to 371 (AIIVFAACFL…VTEDQETSMS (182 aa)). The tract at residues 331-371 (RRESARPQPEFVMPRSEEKPEVAPVENRSAPVTEDQETSMS) is disordered.

In terms of assembly, interacts with KLC1; may link mitochondria to KLC1 and regulate mitochondria localization into neuron projections. Interacts with GLS; the interaction is direct and may control GLS localization, negatively regulating its activity. Interacts with PIN1 (via WW domain); upon NGF stimulation. The interaction with PIN1 and GLS is competitive. Cleaved by CASP3 and CASP7. The potential C-terminal product released by CASP3 cleavage may inhibit the ERK signaling pathway through MAP2K2. Post-translationally, may be ubiquitinated by STUB1.

It localises to the cell projection. The protein resides in the axon. Its subcellular location is the dendrite. The protein localises to the presynapse. It is found in the mitochondrion. It localises to the growth cone. The protein resides in the cytoplasm. Functionally, functions in the development of neural tissues, particularly the postnatal maturation of the cerebellar cortex. May play a role in neurotransmission through regulation of glutaminase/GLS, an enzyme responsible for the production in neurons of the glutamate neurotransmitter. Alternatively, may regulate the localization of mitochondria within axons and dendrites. The protein is Caytaxin (ATCAY) of Macaca fascicularis (Crab-eating macaque).